A 191-amino-acid chain; its full sequence is Fe/S biogenesis protein NfuA (191 aa).

Positions 149 and 152 each coordinate [4Fe-4S] cluster.

The protein belongs to the NfuA family. In terms of assembly, homodimer. Requires [4Fe-4S] cluster as cofactor.

Its function is as follows. Involved in iron-sulfur cluster biogenesis. Binds a 4Fe-4S cluster, can transfer this cluster to apoproteins, and thereby intervenes in the maturation of Fe/S proteins. Could also act as a scaffold/chaperone for damaged Fe/S proteins. The polypeptide is Fe/S biogenesis protein NfuA (Salmonella typhi).